Consider the following 427-residue polypeptide: GTPase Obg (427 aa).

One can recognise an Obg domain in the interval 1 to 158 (MFVDIAKIYV…LWVILELKVL (158 aa)). An OBG-type G domain is found at 159–330 (ADVGLIGYPN…VLKRAYELLK (172 aa)). Residues 165–172 (GYPNVGKS), 190–194 (FTTKY), 212–215 (DIPG), 282–285 (NKMD), and 311–313 (SAA) contribute to the GTP site. The Mg(2+) site is built by Ser172 and Thr192. The OCT domain maps to 347–427 (FVYYKKKDVK…ILDVEFEYYE (81 aa)).

The protein belongs to the TRAFAC class OBG-HflX-like GTPase superfamily. OBG GTPase family. As to quaternary structure, monomer. Mg(2+) is required as a cofactor.

The protein resides in the cytoplasm. An essential GTPase which binds GTP, GDP and possibly (p)ppGpp with moderate affinity, with high nucleotide exchange rates and a fairly low GTP hydrolysis rate. Plays a role in control of the cell cycle, stress response, ribosome biogenesis and in those bacteria that undergo differentiation, in morphogenesis control. The sequence is that of GTPase Obg from Caldicellulosiruptor saccharolyticus (strain ATCC 43494 / DSM 8903 / Tp8T 6331).